A 751-amino-acid chain; its full sequence is Protein WEAK CHLOROPLAST MOVEMENT UNDER BLUE LIGHT-like 3 (751 aa).

Ser-113 bears the Phosphoserine mark. Coiled coils occupy residues 165-558 (ERRK…ALQE) and 588-647 (QALE…KARD). 2 stretches are compositionally biased toward basic and acidic residues: residues 455 to 467 (RERQ…KQKE) and 625 to 689 (NREM…RNKE). Disordered stretches follow at residues 455-479 (RERQ…DKDA) and 625-751 (NREM…HSHK). The segment covering 704–723 (GSSSNNTGGSTTTNNNNLTP) has biased composition (low complexity).

Belongs to the WEB family.

The chain is Protein WEAK CHLOROPLAST MOVEMENT UNDER BLUE LIGHT-like 3 (WEL3) from Arabidopsis thaliana (Mouse-ear cress).